The following is a 70-amino-acid chain: Prokaryotic ubiquitin-like protein UBact (70 aa).

Basic and acidic residues-rich tracts occupy residues 1–15 (MPDQ…RKQG) and 24–50 (TRHD…RDPG). The segment at 1-70 (MPDQRQQERS…RQQRREQSGE (70 aa)) is disordered. Residue Glu-70 forms an Isoglutamyl lysine isopeptide (Glu-Lys) (interchain with K-? in acceptor proteins) linkage.

This sequence belongs to the ubiquitin-like protein UBact family.

Functionally, may function as a protein modifier covalently attached to lysine residues of substrate proteins. This may serve to target the modified proteins for degradation by proteasomes. The protein is Prokaryotic ubiquitin-like protein UBact of Terrybacteria sp. (strain RIFCSPHIGHO2_01_FULL_58_15).